A 595-amino-acid chain; its full sequence is Merlin (595 aa).

S13 bears the Phosphoserine mark. Residues 22–311 enclose the FERM domain; it reads FTVRIVTMDA…GNHDLFMRRR (290 aa). The residue at position 518 (S518) is a Phosphoserine; by PAK.

Interacts with NHERF1, HGS and AGAP2. Interacts with SGSM3. Interacts (via FERM domain) with MPP1. Interacts with LAYN and WWC1. Interacts with the CUL4A-RBX1-DDB1-VprBP/DCAF1 E3 ubiquitin-protein ligase complex. The unphosphorylated form interacts (via FERM domain) with VPRBP/DCAF1. Interacts (via FERM domain) with NOP53; the interaction is direct. Interacts with SCHIP1; the interaction is direct. Post-translationally, phosphorylation of Ser-518 inhibits nuclear localization by disrupting the intramolecular association of the FERM domain with the C-terminal tail. Ubiquitinated by the CUL4A-RBX1-DDB1-DCAF1/VprBP E3 ubiquitin-protein ligase complex for ubiquitination and subsequent proteasome-dependent degradation. In terms of processing, phosphorylation of Ser-518 inhibits nuclear localization by disrupting the intramolecular association of the FERM domain with the C-terminal tail. The dephosphorylation of Ser-518 favors the interaction with NOP53.

It is found in the cell membrane. Its subcellular location is the cell projection. It localises to the cytoplasm. The protein localises to the cytoskeleton. The protein resides in the nucleus. Probable regulator of the Hippo/SWH (Sav/Wts/Hpo) signaling pathway, a signaling pathway that plays a pivotal role in tumor suppression by restricting proliferation and promoting apoptosis. Along with WWC1 can synergistically induce the phosphorylation of LATS1 and LATS2 and can probably function in the regulation of the Hippo/SWH (Sav/Wts/Hpo) signaling pathway. May act as a membrane stabilizing protein. May inhibit PI3 kinase by binding to AGAP2 and impairing its stimulating activity. Suppresses cell proliferation and tumorigenesis by inhibiting the CUL4A-RBX1-DDB1-VprBP/DCAF1 E3 ubiquitin-protein ligase complex. The sequence is that of Merlin (NF2) from Papio anubis (Olive baboon).